Reading from the N-terminus, the 312-residue chain is tRNA dimethylallyltransferase (312 aa).

Residue 17-24 (GPTASGKT) participates in ATP binding. A substrate-binding site is contributed by 19–24 (TASGKT). 3 interaction with substrate tRNA regions span residues 42-45 (DSAL), 166-170 (QRLLR), and 247-252 (RCVGYR).

The protein belongs to the IPP transferase family. In terms of assembly, monomer. Mg(2+) is required as a cofactor.

It catalyses the reaction adenosine(37) in tRNA + dimethylallyl diphosphate = N(6)-dimethylallyladenosine(37) in tRNA + diphosphate. Its function is as follows. Catalyzes the transfer of a dimethylallyl group onto the adenine at position 37 in tRNAs that read codons beginning with uridine, leading to the formation of N6-(dimethylallyl)adenosine (i(6)A). The polypeptide is tRNA dimethylallyltransferase (Sodalis glossinidius (strain morsitans)).